Consider the following 341-residue polypeptide: tRNA N6-adenosine threonylcarbamoyltransferase (341 aa).

Fe cation-binding residues include H111 and H115. Residues L134–G138, D167, G180, and N277 each bind substrate. D305 contributes to the Fe cation binding site.

Belongs to the KAE1 / TsaD family. The cofactor is Fe(2+).

It is found in the cytoplasm. It catalyses the reaction L-threonylcarbamoyladenylate + adenosine(37) in tRNA = N(6)-L-threonylcarbamoyladenosine(37) in tRNA + AMP + H(+). Required for the formation of a threonylcarbamoyl group on adenosine at position 37 (t(6)A37) in tRNAs that read codons beginning with adenine. Is involved in the transfer of the threonylcarbamoyl moiety of threonylcarbamoyl-AMP (TC-AMP) to the N6 group of A37, together with TsaE and TsaB. TsaD likely plays a direct catalytic role in this reaction. The chain is tRNA N6-adenosine threonylcarbamoyltransferase from Chromobacterium violaceum (strain ATCC 12472 / DSM 30191 / JCM 1249 / CCUG 213 / NBRC 12614 / NCIMB 9131 / NCTC 9757 / MK).